Consider the following 574-residue polypeptide: Acetolactate synthase isozyme 3 large subunit (574 aa).

Glutamate 51 provides a ligand contact to thiamine diphosphate. FAD-binding positions include arginine 153, 261–282, and 304–323; these read HGTYEANMTMHNADVIFAVGVR and DIDPTSISKTVTADIPIVGD. Residues 397–477 are thiamine pyrophosphate binding; sequence QHQMFAALYY…VLVVNLNNRY (81 aa). The Mg(2+) site is built by aspartate 448 and asparagine 475.

The protein belongs to the TPP enzyme family. In terms of assembly, dimer of large and small chains. It depends on Mg(2+) as a cofactor. Thiamine diphosphate serves as cofactor.

The catalysed reaction is 2 pyruvate + H(+) = (2S)-2-acetolactate + CO2. It functions in the pathway amino-acid biosynthesis; L-isoleucine biosynthesis; L-isoleucine from 2-oxobutanoate: step 1/4. Its pathway is amino-acid biosynthesis; L-valine biosynthesis; L-valine from pyruvate: step 1/4. With respect to regulation, sensitive to valine inhibition. This Escherichia coli (strain K12) protein is Acetolactate synthase isozyme 3 large subunit (ilvI).